A 137-amino-acid polypeptide reads, in one-letter code: Small ribosomal subunit protein uS12 (137 aa).

Residue Asp-89 is modified to 3-methylthioaspartic acid. Positions 104 to 137 are disordered; sequence TAGVNGRKQSRSKYGAKRPKPGQAAAAPAKGKKK. Positions 111-123 are enriched in basic residues; the sequence is KQSRSKYGAKRPK. Low complexity predominate over residues 124–137; it reads PGQAAAAPAKGKKK.

The protein belongs to the universal ribosomal protein uS12 family. In terms of assembly, part of the 30S ribosomal subunit. Contacts proteins S8 and S17. May interact with IF1 in the 30S initiation complex.

In terms of biological role, with S4 and S5 plays an important role in translational accuracy. Its function is as follows. Interacts with and stabilizes bases of the 16S rRNA that are involved in tRNA selection in the A site and with the mRNA backbone. Located at the interface of the 30S and 50S subunits, it traverses the body of the 30S subunit contacting proteins on the other side and probably holding the rRNA structure together. The combined cluster of proteins S8, S12 and S17 appears to hold together the shoulder and platform of the 30S subunit. The sequence is that of Small ribosomal subunit protein uS12 from Cytophaga hutchinsonii (strain ATCC 33406 / DSM 1761 / CIP 103989 / NBRC 15051 / NCIMB 9469 / D465).